Here is a 308-residue protein sequence, read N- to C-terminus: MSEITAAMVKELREKTGAGMMDCKKALAETNGDMEAAIDWLRAKGIAKADKKSGRTAAEGLIGVSSEGTKAVVVEVNSETDFVARNDAFQDLVRGIAKVAVSTNGSVEAVAAATYPASGKSVSDTIKDAIATIGENMNLRRSVALSVEDGVVATYIHNAVSDGLGKLGVLVALKSTGDKEALNAIGRQVAMHIAATAPLAIRPEEVDAAVAERERNVFIEQSRASGKPDNIIEKMVEGRMRKFFEEVALLSQAFVINPDLTVAAAVKEAEKAVGAPIEVAGMARLLLGEGVEKEETDFAAEVAAAVKG.

The involved in Mg(2+) ion dislocation from EF-Tu stretch occupies residues 80 to 83; sequence TDFV.

The protein belongs to the EF-Ts family.

It is found in the cytoplasm. Its function is as follows. Associates with the EF-Tu.GDP complex and induces the exchange of GDP to GTP. It remains bound to the aminoacyl-tRNA.EF-Tu.GTP complex up to the GTP hydrolysis stage on the ribosome. This chain is Elongation factor Ts, found in Rhizobium etli (strain CIAT 652).